We begin with the raw amino-acid sequence, 459 residues long: Zinc finger transcription factor lin-29 (459 aa).

Over residues 1-14 (MDQTVLDSAFNSPV) the composition is skewed to polar residues. Residues 1–73 (MDQTVLDSAF…GSTGSTPAHH (73 aa)) are disordered. A compositionally biased stretch (low complexity) spans 16–56 (SGIAGTTTGSGSTTHFGVGTNFKVSVRSSSRSTDGTDSTDG). Residues 57 to 73 (ANSDNVTGSTGSTPAHH) show a composition bias toward polar residues. 5 C2H2-type zinc fingers span residues 151–173 (YKCT…MRIH), 180–202 (GPCN…IRTH), 208–232 (YKCK…SRCH), 238–260 (FKCN…IPKH), and 269–291 (HICP…MTKH). Positions 390–406 (PGFNMITPLENIQRYNG) are interacts with mab-10. Over residues 423-444 (VSSTPSSTSSSSAGSSSSQGGV) the composition is skewed to low complexity. The tract at residues 423–459 (VSSTPSSTSSSSAGSSSSQGGVFNPQSLINNMKNHSY) is disordered. Over residues 446-459 (NPQSLINNMKNHSY) the composition is skewed to polar residues.

In terms of assembly, interacts (via C-terminus) with transcription cofactor mab-10. As to expression, expressed in lateral hypodermal seam cells (at protein level).

The protein localises to the nucleus. Functionally, transcription factor which regulates the expression of various genes, including those involved in cuticle synthesis and maintenance, such as collagens, and in lipid metabolism. Binds to promoter regions of genes, at 5'-[(T/G)TTTTTT(A/T/C/G)]-3' consensus sequences. Heterochronic protein which controls the choice of stage specific cell fates, including at the juvenile to adult transition. Promotes differentiation, together with transcriptional cofactor mab-10, perhaps as part of a transcriptional complex. Required for vulval morphogenesis and egg laying; perhaps by acting in a subset of the lateral seam cells. Involved in the exit of seam cells from the cell cycle. Required for specification of uterine pi-cell fate, acting upstream of lin-12 Notch signaling, perhaps via maintenance of lag-2 expression in the anchor cell (AC). Involved in morphogenesis of the specialized male tail used in mating. Acts cell non-autonomously from the hypodermis to regulate expression of genes in the intestine, including genes involved in lipid metabolism. May regulate vitellogenesis via the mTORC2 signaling mediated pathway, independently of daf-16. May promote nuclear accumulation of mab-10 in seam cells post-transcriptionally. Dispensable for seam cell fusion. In terms of biological role, required for seam cell fusion. In Caenorhabditis elegans, this protein is Zinc finger transcription factor lin-29.